The chain runs to 160 residues: Small ribosomal subunit protein uS7B (160 aa).

It belongs to the universal ribosomal protein uS7 family. In terms of assembly, part of the 30S ribosomal subunit. Contacts proteins S9 and S11.

Its function is as follows. One of the primary rRNA binding proteins, it binds directly to 16S rRNA where it nucleates assembly of the head domain of the 30S subunit. Is located at the subunit interface close to the decoding center, probably blocks exit of the E-site tRNA. In Aquifex aeolicus (strain VF5), this protein is Small ribosomal subunit protein uS7B.